The sequence spans 325 residues: Beta-ketoacyl-[acyl-carrier-protein] synthase III (325 aa).

Catalysis depends on residues C116 and H252. Positions 253–257 are ACP-binding; the sequence is QANLR. N282 is a catalytic residue.

Belongs to the thiolase-like superfamily. FabH family. As to quaternary structure, homodimer.

It is found in the cytoplasm. It carries out the reaction malonyl-[ACP] + acetyl-CoA + H(+) = 3-oxobutanoyl-[ACP] + CO2 + CoA. The protein operates within lipid metabolism; fatty acid biosynthesis. Functionally, catalyzes the condensation reaction of fatty acid synthesis by the addition to an acyl acceptor of two carbons from malonyl-ACP. Catalyzes the first condensation reaction which initiates fatty acid synthesis and may therefore play a role in governing the total rate of fatty acid production. Possesses both acetoacetyl-ACP synthase and acetyl transacylase activities. Its substrate specificity determines the biosynthesis of branched-chain and/or straight-chain of fatty acids. In Xanthomonas axonopodis pv. citri (strain 306), this protein is Beta-ketoacyl-[acyl-carrier-protein] synthase III.